The primary structure comprises 314 residues: Very long chain fatty acid elongase 4 (314 aa).

Residue Asn20 is glycosylated (N-linked (GlcNAc...) asparagine). 7 consecutive transmembrane segments (helical) span residues 42–62 (LMQSPWPTLSISTLYLLFVWL), 78–98 (VLIIYNFGMVLLNFFIFRELF), 127–147 (ALWWYFVSKGVEYLDTVFFIL), 165–185 (MFTLWWIGIKWVAGGQAFFGA), 188–208 (NSFIHVIMYSYYGLAAFGPWI), 217–237 (YLTMLQLVQFHVTIGHTALSL), and 247–267 (MHWALIAYAISFIFLFLNFYI). The tract at residues 274 to 314 (KKPKTGKTAMNGISANGVSKSEKQLVIENGKKQKNGKAKGD) is disordered. Residues 293–304 (KSEKQLVIENGK) show a composition bias toward basic and acidic residues. Basic residues predominate over residues 305-314 (KQKNGKAKGD). A Di-lysine motif motif is present at residues 310–314 (KAKGD).

It belongs to the ELO family. ELOVL4 subfamily. As to quaternary structure, oligomer. Post-translationally, N-glycosylated. In terms of tissue distribution, expressed mainly in retina. Also expressed in skin and thymus.

The protein resides in the endoplasmic reticulum membrane. It carries out the reaction a very-long-chain acyl-CoA + malonyl-CoA + H(+) = a very-long-chain 3-oxoacyl-CoA + CO2 + CoA. The enzyme catalyses hexacosanoyl-CoA + malonyl-CoA + H(+) = 3-oxooctacosanyol-CoA + CO2 + CoA. The catalysed reaction is octacosanoyl-CoA + malonyl-CoA + H(+) = 3-oxo-triacontanoyl-CoA + CO2 + CoA. It catalyses the reaction triacontanoyl-CoA + malonyl-CoA + H(+) = 3-oxo-dotriacontanoyl-CoA + CO2 + CoA. It carries out the reaction (19Z,22Z,25Z,28Z,31Z)-tetratriacontapentaenoyl-CoA + malonyl-CoA + H(+) = 3-oxo-(21Z,24Z,27Z,30Z,33Z)-hexatriacontapentaenoyl-CoA + CO2 + CoA. The enzyme catalyses (4Z,7Z,10Z,13Z,16Z,19Z)-docosahexaenoyl-CoA + malonyl-CoA + H(+) = 3-oxo-(6Z,9Z,12Z,15Z,18Z,21Z)-tetracosahexaenoyl-CoA + CO2 + CoA. The catalysed reaction is (7Z,10Z,13Z,16Z)-docosatetraenoyl-CoA + malonyl-CoA + H(+) = (9Z,12Z,15Z,18Z)-3-oxotetracosatetraenoyl-CoA + CO2 + CoA. It catalyses the reaction (11Z,14Z,17Z,20Z,23Z)-hexacosapentaenoyl-CoA + malonyl-CoA + H(+) = 3-oxo-(13Z,16Z,19Z,22Z,25Z)-octacosapentaenoyl-CoA + CO2 + CoA. It carries out the reaction (13Z,16Z,19Z,22Z,25Z)-octacosapentaenoyl-CoA + malonyl-CoA + H(+) = 3-oxo-(15Z,18Z,21Z,24Z,27Z)-triacontapentaenoyl-CoA + CO2 + CoA. The enzyme catalyses (15Z,18Z,21Z,24Z,27Z)-triacontapentaenoyl-CoA + malonyl-CoA + H(+) = 3-oxo-(17Z,20Z,23Z,26Z,29Z)-dotriacontapentaenoyl-CoA + CO2 + CoA. The catalysed reaction is (17Z,20Z,23Z,26Z,29Z)-dotriacontapentaenoyl-CoA + malonyl-CoA + H(+) = 3-oxo-(19Z,22Z,25Z,28Z,31Z)-tetratriacontapentaenoyl-CoA + CO2 + CoA. It catalyses the reaction (21Z,24Z,27Z,30Z,33Z)-hexatriacontapentaenoyl-CoA + malonyl-CoA + H(+) = 3-oxo-(23Z,26Z,29Z,32Z,35Z)-octatriacontapentaenoyl-CoA + CO2 + CoA. It carries out the reaction (11Z,14Z,17Z,20Z)-hexacosatetraenoyl-CoA + malonyl-CoA + H(+) = (13Z,16Z,19Z,22Z)-3-oxooctacosatetraenoyl-CoA + CO2 + CoA. The enzyme catalyses (13Z,16Z,19Z,22Z)-octacosatetraenoyl-CoA + malonyl-CoA + H(+) = 3-oxo-(15Z,18Z,21Z,24Z)-triacontatetraenoyl-CoA + CO2 + CoA. The catalysed reaction is (15Z,18Z,21Z,24Z)-triacontatetraenoyl-CoA + malonyl-CoA + H(+) = 3-oxo-(17Z,20Z,23Z,26Z)-dotriacontatetraenoyl-CoA + CO2 + CoA. It catalyses the reaction (17Z,20Z,23Z,26Z)-dotriacontatetraenoyl-CoA + malonyl-CoA + H(+) = 3-oxo-(19Z,22Z,25Z,28Z)-tetratriacontatetraenoyl-CoA + CO2 + CoA. It carries out the reaction (19Z,22Z,25Z,28Z)-tetratriacontatetraenoyl-CoA + malonyl-CoA + H(+) = 3-oxo-(21Z,24Z,27Z,30Z)-hexatriacontatetraenoyl-CoA + CO2 + CoA. The enzyme catalyses (21Z,24Z,27Z,30Z)-hexatriacontatetraenoyl-CoA + malonyl-CoA + H(+) = 3-oxo-(23Z,26Z,29Z,32Z)-octatriacontatetraenoyl-CoA + CO2 + CoA. The catalysed reaction is (6Z,9Z,12Z,15Z,18Z,21Z)-tetracosahexaenoyl-CoA + malonyl-CoA + H(+) = 3-oxo-(8Z,11Z,14Z,17Z,20Z,23Z)-hexacosahexaenoyl-CoA + CO2 + CoA. It catalyses the reaction (8Z,11Z,14Z,17Z,20Z,23Z)-hexacosahexaenoyl-CoA + malonyl-CoA + H(+) = 3-oxo-(10Z,13Z,16Z,19Z,22Z,25Z)-octacosahexaenoyl-CoA + CO2 + CoA. It carries out the reaction (10Z,13Z,16Z,19Z,22Z,25Z)-octacosahexaenoyl-CoA + malonyl-CoA + H(+) = 3-oxo-(12Z,15Z,18Z,21Z,24Z,27Z)-triacontahexaenoyl-CoA + CO2 + CoA. The enzyme catalyses (12Z,15Z,18Z,21Z,24Z,27Z)-triacontahexaenoyl-CoA + malonyl-CoA + H(+) = 3-oxo-(14Z,17Z,20Z,23Z,26Z,29Z)-dotriacontahexaenoyl-CoA + CO2 + CoA. The catalysed reaction is (14Z,17Z,20Z,23Z,26Z,29Z)-dotriacontahexaenoyl-CoA + malonyl-CoA + H(+) = 3-oxo-(16Z,19Z,22Z,25Z,28Z,31Z)-tetratriacontahexaenoyl-CoA + CO2 + CoA. It catalyses the reaction (16Z,19Z,22Z,25Z,28Z,31Z)-tetratriacontahexaenoyl-CoA + malonyl-CoA + H(+) = 3-oxo-(18Z,21Z,24Z,27Z,30Z,33Z)-hexatriacontahexaenoyl-CoA + CO2 + CoA. It carries out the reaction (9Z,12Z,15Z,18Z,21Z)-tetracosapentaenoyl-CoA + malonyl-CoA + H(+) = 3-oxo-(11Z,14Z,17Z,20Z,23Z)-hexacosapentaenoyl-CoA + CO2 + CoA. It functions in the pathway lipid metabolism; fatty acid biosynthesis. Its function is as follows. Catalyzes the first and rate-limiting reaction of the four reactions that constitute the long-chain fatty acids elongation cycle. This endoplasmic reticulum-bound enzymatic process allows the addition of 2 carbons to the chain of long- and very long-chain fatty acids (VLCFAs) per cycle. Condensing enzyme that catalyzes the synthesis of very long chain saturated (VLC-SFA) and polyunsaturated (PUFA) fatty acids that are involved in multiple biological processes as precursors of membrane lipids and lipid mediators. May play a critical role in early brain and skin development. The polypeptide is Very long chain fatty acid elongase 4 (Macaca fascicularis (Crab-eating macaque)).